Reading from the N-terminus, the 450-residue chain is Glutamate--tRNA ligase 2 (450 aa).

The 'HIGH' region signature appears at P10–N20. The 'KMSKS' region signature appears at G243–R247. Residue K246 participates in ATP binding.

Belongs to the class-I aminoacyl-tRNA synthetase family. Glutamate--tRNA ligase type 1 subfamily. In terms of assembly, monomer.

Its subcellular location is the cytoplasm. It catalyses the reaction tRNA(Glu) + L-glutamate + ATP = L-glutamyl-tRNA(Glu) + AMP + diphosphate. In terms of biological role, catalyzes the attachment of glutamate to tRNA(Glu) in a two-step reaction: glutamate is first activated by ATP to form Glu-AMP and then transferred to the acceptor end of tRNA(Glu). This chain is Glutamate--tRNA ligase 2, found in Beijerinckia indica subsp. indica (strain ATCC 9039 / DSM 1715 / NCIMB 8712).